Here is a 415-residue protein sequence, read N- to C-terminus: Gamma-glutamyl phosphate reductase (415 aa).

Belongs to the gamma-glutamyl phosphate reductase family.

The protein resides in the cytoplasm. The enzyme catalyses L-glutamate 5-semialdehyde + phosphate + NADP(+) = L-glutamyl 5-phosphate + NADPH + H(+). The protein operates within amino-acid biosynthesis; L-proline biosynthesis; L-glutamate 5-semialdehyde from L-glutamate: step 2/2. Its function is as follows. Catalyzes the NADPH-dependent reduction of L-glutamate 5-phosphate into L-glutamate 5-semialdehyde and phosphate. The product spontaneously undergoes cyclization to form 1-pyrroline-5-carboxylate. The protein is Gamma-glutamyl phosphate reductase of Listeria welshimeri serovar 6b (strain ATCC 35897 / DSM 20650 / CCUG 15529 / CIP 8149 / NCTC 11857 / SLCC 5334 / V8).